A 423-amino-acid polypeptide reads, in one-letter code: Deferrochelatase (423 aa).

Positions 1 to 35 form a signal peptide, tat-type signal; that stretch reads MQYEDENGVNEPSRRRLLKGIGALALAGSCPVAHA. Heme b-binding positions include 236-238, H329, 334-336, and R347; these read GTA and NPR.

The protein belongs to the DyP-type peroxidase family. EfeB subfamily. Homodimer. Part of a ferrous iron transporter composed of EfeU, EfeO and EfeB. The cofactor is heme b. In terms of processing, predicted to be exported by the Tat system. The position of the signal peptide cleavage has not been experimentally proven.

It localises to the periplasm. The enzyme catalyses heme b + 2 H(+) = protoporphyrin IX + Fe(2+). Involved in the recovery of exogenous heme iron. Extracts iron from heme while preserving the protoporphyrin ring intact. The protein is Deferrochelatase (efeB) of Escherichia coli O6:H1 (strain CFT073 / ATCC 700928 / UPEC).